The chain runs to 649 residues: Threonine--tRNA ligase (649 aa).

The TGS domain occupies 1–60; sequence MHVTLPDGKQLDLQAGATALDVARALGPRLAQDALAALVNGELMDLMTPLPEGAQVRLIT. The tract at residues 248-544 is catalytic; that stretch reads DHRKLGRELE…LIEHYGGDFP (297 aa). C341, H392, and H521 together coordinate Zn(2+).

The protein belongs to the class-II aminoacyl-tRNA synthetase family. As to quaternary structure, homodimer. It depends on Zn(2+) as a cofactor.

Its subcellular location is the cytoplasm. It carries out the reaction tRNA(Thr) + L-threonine + ATP = L-threonyl-tRNA(Thr) + AMP + diphosphate + H(+). Functionally, catalyzes the attachment of threonine to tRNA(Thr) in a two-step reaction: L-threonine is first activated by ATP to form Thr-AMP and then transferred to the acceptor end of tRNA(Thr). Also edits incorrectly charged L-seryl-tRNA(Thr). The protein is Threonine--tRNA ligase of Deinococcus geothermalis (strain DSM 11300 / CIP 105573 / AG-3a).